The primary structure comprises 224 residues: Uridylate kinase (224 aa).

Residue Gly9–Ser10 participates in ATP binding. Gly43 is a binding site for UMP. ATP is bound by residues Gly44 and Arg48. UMP contacts are provided by residues Asp65 and Val113–Thr119. ATP-binding residues include Thr139, Phe145, and Asp148.

The protein belongs to the UMP kinase family. In terms of assembly, homohexamer.

It localises to the cytoplasm. The enzyme catalyses UMP + ATP = UDP + ADP. The protein operates within pyrimidine metabolism; CTP biosynthesis via de novo pathway; UDP from UMP (UMPK route): step 1/1. With respect to regulation, inhibited by UTP. In terms of biological role, catalyzes the reversible phosphorylation of UMP to UDP. In Methanocella arvoryzae (strain DSM 22066 / NBRC 105507 / MRE50), this protein is Uridylate kinase.